The sequence spans 468 residues: MSSGKIAQVVGPVVDVMFASGDKLPEINNALIVYKDSDKKQKIVLEVALELGDGMVRTIAMESTDGLTRGLEVLDTGRAISVPVGKETLGRVFNVLGETIDLEEPFAEDVDRQPIHKKAPSFDELSTSSEILETGIKVIDLLAPYLKGGKVGLFGGAGVGKTVLIQELIHNIAQEHGGISVFTGVGERTREGNDLYWEMKESGVIEKTAMVFGQMNEPPGARMRVALTGLTIAEYFRDVEGQDVLLFIDNIFRFTQAGSEVSALLGRMPSAVGYQPTLATEMGQLQERITSTQKGSVTSIQAIYVPADDYTDPAPATAFAHLDSTTNLERKLTQMGIYPAVDPLASSSRALSPEIVGEEHYAVATEVQRVLQRYRELQDIIAILGMDELSDEEKTLVGRARRIQFFLSQNFNVAEQFTGLPGSYVPVAETVRGFKEILEGKYDHLPEDAFRSVGPIEDVIKKAEKMGF.

155-162 (GGAGVGKT) serves as a coordination point for ATP.

It belongs to the ATPase alpha/beta chains family. In terms of assembly, F-type ATPases have 2 components, CF(1) - the catalytic core - and CF(0) - the membrane proton channel. CF(1) has five subunits: alpha(3), beta(3), gamma(1), delta(1), epsilon(1). CF(0) has three main subunits: a(1), b(2) and c(9-12). The alpha and beta chains form an alternating ring which encloses part of the gamma chain. CF(1) is attached to CF(0) by a central stalk formed by the gamma and epsilon chains, while a peripheral stalk is formed by the delta and b chains.

It is found in the cell membrane. It carries out the reaction ATP + H2O + 4 H(+)(in) = ADP + phosphate + 5 H(+)(out). Produces ATP from ADP in the presence of a proton gradient across the membrane. The catalytic sites are hosted primarily by the beta subunits. In Streptococcus pyogenes serotype M6 (strain ATCC BAA-946 / MGAS10394), this protein is ATP synthase subunit beta.